The sequence spans 222 residues: Nucleoside triphosphate pyrophosphatase (222 aa).

Asp-82 serves as the catalytic Proton acceptor.

The protein belongs to the Maf family. Requires a divalent metal cation as cofactor.

The protein localises to the cytoplasm. The catalysed reaction is a ribonucleoside 5'-triphosphate + H2O = a ribonucleoside 5'-phosphate + diphosphate + H(+). It carries out the reaction a 2'-deoxyribonucleoside 5'-triphosphate + H2O = a 2'-deoxyribonucleoside 5'-phosphate + diphosphate + H(+). Its function is as follows. Nucleoside triphosphate pyrophosphatase. May have a dual role in cell division arrest and in preventing the incorporation of modified nucleotides into cellular nucleic acids. The chain is Nucleoside triphosphate pyrophosphatase from Mycobacterium bovis (strain ATCC BAA-935 / AF2122/97).